A 62-amino-acid chain; its full sequence is Inner membrane protein p12 (62 aa).

A helical transmembrane segment spans residues 16-36 (LLIVAIIVVIMAIMLYYFWWM).

This sequence belongs to the asfivirus inner membrane protein p12 family. In terms of assembly, homomultimer; disulfide-linked. In terms of processing, not glycosylated.

It localises to the virion membrane. This African swine fever virus (isolate Tick/Malawi/Lil 20-1/1983) (ASFV) protein is Inner membrane protein p12.